The primary structure comprises 166 residues: Sec-independent protein translocase protein TatB (166 aa).

The helical transmembrane segment at 2 to 22 (FNDIGALELLTLGVLAVLVFG) threads the bilayer. The segment at 110–166 (TPAASDTANSAVNGSAGAAADGVTTSLTKTGETTPDLLKKAPQQAQPERPPFDADAT) is disordered. Residues 117 to 129 (ANSAVNGSAGAAA) are compositionally biased toward low complexity. The span at 132 to 142 (VTTSLTKTGET) shows a compositional bias: polar residues.

This sequence belongs to the TatB family. In terms of assembly, the Tat system comprises two distinct complexes: a TatABC complex, containing multiple copies of TatA, TatB and TatC subunits, and a separate TatA complex, containing only TatA subunits. Substrates initially bind to the TatABC complex, which probably triggers association of the separate TatA complex to form the active translocon.

It is found in the cell membrane. In terms of biological role, part of the twin-arginine translocation (Tat) system that transports large folded proteins containing a characteristic twin-arginine motif in their signal peptide across membranes. Together with TatC, TatB is part of a receptor directly interacting with Tat signal peptides. TatB may form an oligomeric binding site that transiently accommodates folded Tat precursor proteins before their translocation. This Streptomyces griseus subsp. griseus (strain JCM 4626 / CBS 651.72 / NBRC 13350 / KCC S-0626 / ISP 5235) protein is Sec-independent protein translocase protein TatB.